Consider the following 532-residue polypeptide: Phosphoenolpyruvate carboxykinase (ATP) (532 aa).

Positions 60, 194, and 200 each coordinate substrate. ATP-binding positions include Lys200, His219, and 237 to 245 (GLSGTGKTT). Residues Lys200 and His219 each contribute to the Mn(2+) site. Mn(2+) is bound at residue Asp258. 3 residues coordinate ATP: Glu286, Arg324, and Thr449. Arg324 is a binding site for substrate.

The protein belongs to the phosphoenolpyruvate carboxykinase (ATP) family. Mn(2+) serves as cofactor.

The protein localises to the cytoplasm. The enzyme catalyses oxaloacetate + ATP = phosphoenolpyruvate + ADP + CO2. It participates in carbohydrate biosynthesis; gluconeogenesis. In terms of biological role, involved in the gluconeogenesis. Catalyzes the conversion of oxaloacetate (OAA) to phosphoenolpyruvate (PEP) through direct phosphoryl transfer between the nucleoside triphosphate and OAA. The sequence is that of Phosphoenolpyruvate carboxykinase (ATP) from Cereibacter sphaeroides (strain ATCC 17029 / ATH 2.4.9) (Rhodobacter sphaeroides).